The sequence spans 58 residues: Metallothionein-2B (58 aa).

The tract at residues 1–29 (MPDPCCNDKCECKEGECKTGCKCKSCRCP) is beta. A divalent metal cation contacts are provided by C5, C6, C10, C12, C17, C21, C23, C26, C28, C31, C34, C38, C40, C46, C50, C54, C56, and C57. The alpha stretch occupies residues 30 to 58 (PCDKCSSECKCTSKEECSKTCSKPCSCCP).

This sequence belongs to the metallothionein superfamily. Type 3 family.

In terms of biological role, binds six divalent metal ions. Known to bind copper and cadmium. This Callinectes sapidus (Blue crab) protein is Metallothionein-2B.